We begin with the raw amino-acid sequence, 88 residues long: Acylphosphatase (88 aa).

The Acylphosphatase-like domain occupies 3–88 (AARFVVSGVV…VPPTEDFVTG (86 aa)). Residues arginine 18 and asparagine 36 contribute to the active site.

The protein belongs to the acylphosphatase family.

The enzyme catalyses an acyl phosphate + H2O = a carboxylate + phosphate + H(+). The chain is Acylphosphatase (acyP) from Xanthomonas oryzae pv. oryzae (strain MAFF 311018).